We begin with the raw amino-acid sequence, 290 residues long: MKSLKELSLRIKNIKSVQKITKIMQMVSAAKLLQSQKKLSNSKLHISKLHSIISSLALSADQELLARILNINNEDSFLVFIIASDRGLCGSFNSSVVKFSQEHINKLIANDKKVDIVFFGKKAFETGKNRFNSKNILKVENSKGITLKRVEALVSDIDLSKYNKVKVFYSKFYNTFMQKPILETIKPWSKDSLLIDNSVVSPLTDYSYEYEPQNIEFILKSLTQDYVTASLYSALLESAASENSARMVAMESANRNTKEMLNKLALLYNRSRQAAITTDLIEVIGGAESL.

Belongs to the ATPase gamma chain family. In terms of assembly, F-type ATPases have 2 components, CF(1) - the catalytic core - and CF(0) - the membrane proton channel. CF(1) has five subunits: alpha(3), beta(3), gamma(1), delta(1), epsilon(1). CF(0) has three main subunits: a, b and c.

The protein resides in the cell membrane. Produces ATP from ADP in the presence of a proton gradient across the membrane. The gamma chain is believed to be important in regulating ATPase activity and the flow of protons through the CF(0) complex. This Wolbachia pipientis subsp. Culex pipiens (strain wPip) protein is ATP synthase gamma chain.